Consider the following 488-residue polypeptide: N-succinylglutamate 5-semialdehyde dehydrogenase (488 aa).

221-226 lines the NAD(+) pocket; the sequence is GSSRTG. Active-site residues include E244 and C278.

It belongs to the aldehyde dehydrogenase family. AstD subfamily.

It catalyses the reaction N-succinyl-L-glutamate 5-semialdehyde + NAD(+) + H2O = N-succinyl-L-glutamate + NADH + 2 H(+). It participates in amino-acid degradation; L-arginine degradation via AST pathway; L-glutamate and succinate from L-arginine: step 4/5. In terms of biological role, catalyzes the NAD-dependent reduction of succinylglutamate semialdehyde into succinylglutamate. The polypeptide is N-succinylglutamate 5-semialdehyde dehydrogenase (Pseudomonas fluorescens (strain Pf0-1)).